The following is a 338-amino-acid chain: Taste receptor type 2 member 39 (338 aa).

Residues 1 to 30 (MLGRCFPPNTKEKQQLRMIKLCDPAESELS) are Extracellular-facing. The helical transmembrane segment at 31–51 (PFLITLTLAVLLAEYLTGIIA) threads the bilayer. Over 52–74 (NGFITAIHAAECVQNKSVSTSGR) the chain is Cytoplasmic. The chain crosses the membrane as a helical span at residues 75–95 (ILVFLSVSRIALQSLMMLEIT). Residues 96 to 116 (ISSTSLSFYSEDTVYYAFKIS) are Extracellular-facing. Residues 117–137 (FIFLNFCSLWFAAWLSFFYFV) traverse the membrane as a helical segment. At 138 to 156 (KIANFSYPLFLKLRWRISG) the chain is on the cytoplasmic side. Residues 157-177 (LIPWLLWLSVFISFSHSMFCI) form a helical membrane-spanning segment. Residues 178 to 205 (NICTGYCDNSFPIHSSNSTEKTYFSEIS) are Extracellular-facing. N-linked (GlcNAc...) asparagine glycosylation is present at Asn-194. Residues 206 to 226 (VVSLAFFFNLGIVIPLIMFIL) traverse the membrane as a helical segment. Residues 227 to 262 (AAILLILSLKRHTLYMXSNATGSKDPSMEAHIGAIK) are Cytoplasmic-facing. A helical transmembrane segment spans residues 263–283 (ATSYFLILYIFNAVALFIYLS). Residues 284-291 (NMFDINSL) lie on the Extracellular side of the membrane. The chain crosses the membrane as a helical span at residues 292 to 312 (WNTLCQIIMAAYPASHSILLI). Residues 313-338 (KDNPGLRRAWKQLQHRLHLYPKEWTL) lie on the Cytoplasmic side of the membrane.

This sequence belongs to the G-protein coupled receptor T2R family.

It localises to the membrane. In terms of biological role, receptor that may play a role in the perception of bitterness and is gustducin-linked. May play a role in sensing the chemical composition of the gastrointestinal content. The activity of this receptor may stimulate alpha gustducin, mediate PLC-beta-2 activation and lead to the gating of TRPM5. This Papio hamadryas (Hamadryas baboon) protein is Taste receptor type 2 member 39 (TAS2R39).